The chain runs to 1829 residues: Iron-regulated protein FrpC (1829 aa).

22 Hemolysin-type calcium-binding repeats span residues 869-886, 887-904, 1015-1032, 1033-1050, 1051-1068, 1069-1086, 1087-1104, 1215-1232, 1233-1250, 1251-1268, 1269-1286, 1287-1304, 1415-1432, 1433-1450, 1451-1468, 1469-1486, 1487-1504, 1615-1632, 1633-1650, 1651-1668, 1669-1686, and 1687-1704; these read FGHN…NDTL, IGGA…SDTY, NGGL…DDLL, NGDA…NDTL, NGGE…NDAL, NGGE…NDTL, DGGE…NDAL, and NGGE…NDVL.

The protein belongs to the RTX prokaryotic toxin (TC 1.C.11) family.

It is found in the cell outer membrane. The protein resides in the secreted. In terms of biological role, may participate in the pathogenesis of meningococcal disease. This Neisseria meningitidis serogroup C protein is Iron-regulated protein FrpC (frpC).